We begin with the raw amino-acid sequence, 319 residues long: Plasmodesmata-located protein 4 (319 aa).

A signal peptide spans 1–26 (MVVHLISLLTQTLALIILSLPSIINT). At 27 to 288 (SQLDYDTLVF…EGSKVNTGKS (262 aa)) the chain is on the extracellular side. Intrachain disulfides connect Cys39–Cys127, Cys103–Cys112, Cys115–Cys140, Cys177–Cys247, Cys223–Cys232, and Cys235–Cys260. 2 Gnk2-homologous domains span residues 45-149 (NILQ…FERI) and 170-269 (HGLI…YHPH). A helical transmembrane segment spans residues 289–309 (LAIVVGGVAALVFVAIFFMFL). Residues 289–309 (LAIVVGGVAALVFVAIFFMFL) are necessary and sufficient for plasmodesmal targeting. At 310–319 (KSLRKKGDDC) the chain is on the cytoplasmic side.

This sequence belongs to the cysteine-rich repeat secretory protein family. Plasmodesmata-located proteins (PDLD) subfamily. As to quaternary structure, (Microbial infection) Interacts with Grapevine fanleaf virus (GFLV) 2B-MP. As to expression, highly expressed in seeds and roots.

It is found in the cell membrane. The protein localises to the cell junction. Its subcellular location is the plasmodesma. Functionally, modulates cell-to-cell trafficking. This is Plasmodesmata-located protein 4 from Arabidopsis thaliana (Mouse-ear cress).